The primary structure comprises 443 residues: C4-dicarboxylate transport protein (443 aa).

9 helical membrane-spanning segments follow: residues 17–37, 57–77, 92–112, 139–159, 161–181, 201–221, 234–254, 320–340, and 368–388; these read PFYS…ILLG, LVKM…IAGM, LYFL…ANVV, EQSI…GAFA, GDIL…AMVG, LVAI…AFTI, MLIG…LGAV, IYMT…LSWG, and AATL…ILGI.

It belongs to the dicarboxylate/amino acid:cation symporter (DAACS) (TC 2.A.23) family.

Its subcellular location is the cell inner membrane. Functionally, responsible for the transport of dicarboxylates such as succinate, fumarate, and malate from the periplasm across the membrane. This is C4-dicarboxylate transport protein from Rhizobium leguminosarum bv. trifolii (strain WSM2304).